A 130-amino-acid polypeptide reads, in one-letter code: Small ribosomal subunit protein uS8 (130 aa).

It belongs to the universal ribosomal protein uS8 family. Part of the 30S ribosomal subunit. Contacts proteins S5 and S12.

Its function is as follows. One of the primary rRNA binding proteins, it binds directly to 16S rRNA central domain where it helps coordinate assembly of the platform of the 30S subunit. The polypeptide is Small ribosomal subunit protein uS8 (Chromohalobacter salexigens (strain ATCC BAA-138 / DSM 3043 / CIP 106854 / NCIMB 13768 / 1H11)).